Reading from the N-terminus, the 356-residue chain is Biotin synthase (356 aa).

A disordered region spans residues 1–28 (MTIQANVPTGDETSDEASRQTSNEASSE). Residues 77 to 302 (EDVEVEGIIS…RTVLRYAGGR (226 aa)) enclose the Radical SAM core domain. 3 residues coordinate [4Fe-4S] cluster: C92, C96, and C99. Residues C135, C168, C227, and R297 each contribute to the [2Fe-2S] cluster site.

The protein belongs to the radical SAM superfamily. Biotin synthase family. As to quaternary structure, homodimer. The cofactor is [4Fe-4S] cluster. [2Fe-2S] cluster is required as a cofactor.

The catalysed reaction is (4R,5S)-dethiobiotin + (sulfur carrier)-SH + 2 reduced [2Fe-2S]-[ferredoxin] + 2 S-adenosyl-L-methionine = (sulfur carrier)-H + biotin + 2 5'-deoxyadenosine + 2 L-methionine + 2 oxidized [2Fe-2S]-[ferredoxin]. It functions in the pathway cofactor biosynthesis; biotin biosynthesis; biotin from 7,8-diaminononanoate: step 2/2. Catalyzes the conversion of dethiobiotin (DTB) to biotin by the insertion of a sulfur atom into dethiobiotin via a radical-based mechanism. This chain is Biotin synthase, found in Arthrobacter sp. (strain FB24).